Consider the following 402-residue polypeptide: Speedy protein E2 (402 aa).

The tract at residues 1–89 is disordered; the sequence is MDRTETRFRK…EEPEKELAPE (89 aa). The segment covering 16 to 39 has biased composition (polar residues); it reads GKITTSRQPHPQNEQSPQRSTSGY. Residues 76 to 89 are compositionally biased toward acidic residues; that stretch reads DESEEEPEKELAPE.

The protein belongs to the Speedy/Ringo family.

In Homo sapiens (Human), this protein is Speedy protein E2 (SPDYE2).